The following is a 669-amino-acid chain: Myb-like protein M (669 aa).

Residues aspartate 27 to lysine 69 form a disordered region. Acidic residues predominate over residues leucine 30–tyrosine 40. 2 HTH myb-type domains span residues glutamine 60 to isoleucine 118 and arginine 119 to valine 170. DNA-binding regions (H-T-H motif) lie at residues tryptophan 90–leucine 114 and tryptophan 142–glutamine 166. Residues tryptophan 172–threonine 223 enclose the Myb-like domain. Disordered stretches follow at residues glycine 226 to glycine 530 and isoleucine 550 to serine 636. Composition is skewed to low complexity over residues asparagine 234 to serine 382, asparagine 389 to asparagine 415, and proline 450 to serine 464. The span at cysteine 465 to lysine 482 shows a compositional bias: polar residues. Low complexity-rich tracts occupy residues serine 483–asparagine 521, asparagine 555–asparagine 593, and serine 611–serine 636.

The protein resides in the nucleus. In Dictyostelium discoideum (Social amoeba), this protein is Myb-like protein M (mybM).